A 446-amino-acid polypeptide reads, in one-letter code: Na(+)-translocating NADH-quinone reductase subunit A (446 aa).

The protein belongs to the NqrA family. In terms of assembly, composed of six subunits; NqrA, NqrB, NqrC, NqrD, NqrE and NqrF.

The enzyme catalyses a ubiquinone + n Na(+)(in) + NADH + H(+) = a ubiquinol + n Na(+)(out) + NAD(+). Its function is as follows. NQR complex catalyzes the reduction of ubiquinone-1 to ubiquinol by two successive reactions, coupled with the transport of Na(+) ions from the cytoplasm to the periplasm. NqrA to NqrE are probably involved in the second step, the conversion of ubisemiquinone to ubiquinol. This Histophilus somni (strain 2336) (Haemophilus somnus) protein is Na(+)-translocating NADH-quinone reductase subunit A.